Here is a 591-residue protein sequence, read N- to C-terminus: Aspartate--tRNA ligase (591 aa).

Glu171 serves as a coordination point for L-aspartate. Positions 195–198 (QLFK) are aspartate. Residue Arg217 participates in L-aspartate binding. ATP is bound by residues 217–219 (RDE) and Gln226. His448 lines the L-aspartate pocket. Residue Glu482 participates in ATP binding. Arg489 provides a ligand contact to L-aspartate. 534–537 (GLDR) serves as a coordination point for ATP.

It belongs to the class-II aminoacyl-tRNA synthetase family. Type 1 subfamily. Homodimer.

The protein localises to the cytoplasm. It catalyses the reaction tRNA(Asp) + L-aspartate + ATP = L-aspartyl-tRNA(Asp) + AMP + diphosphate. Its function is as follows. Catalyzes the attachment of L-aspartate to tRNA(Asp) in a two-step reaction: L-aspartate is first activated by ATP to form Asp-AMP and then transferred to the acceptor end of tRNA(Asp). This is Aspartate--tRNA ligase from Edwardsiella ictaluri (strain 93-146).